The primary structure comprises 258 residues: UPF0246 protein YE0603 (258 aa).

The protein belongs to the UPF0246 family.

The chain is UPF0246 protein YE0603 from Yersinia enterocolitica serotype O:8 / biotype 1B (strain NCTC 13174 / 8081).